The chain runs to 139 residues: MLKEFQEFISKGNVMDLAVGVIIGAAFGKIVDSLVNDIIMPIIGAIFGGLDFNNYFVGLSSAVNATSLADARKQGAVLAYGSFITVALNFVILAFIIFLMVKAVNNLRKRLEREKPAAAAPPPADIALLTQIRDLLARK.

3 helical membrane passes run 8–28 (FISK…AAFG), 30–50 (IVDS…FGGL), and 81–101 (GSFI…FLMV).

The protein belongs to the MscL family. Homopentamer.

It is found in the cell inner membrane. In terms of biological role, channel that opens in response to stretch forces in the membrane lipid bilayer. May participate in the regulation of osmotic pressure changes within the cell. The chain is Large-conductance mechanosensitive channel 1 from Mesorhizobium japonicum (strain LMG 29417 / CECT 9101 / MAFF 303099) (Mesorhizobium loti (strain MAFF 303099)).